A 213-amino-acid polypeptide reads, in one-letter code: Large ribosomal subunit protein uL1 (213 aa).

It belongs to the universal ribosomal protein uL1 family. In terms of assembly, part of the 50S ribosomal subunit.

Binds directly to 23S rRNA. Probably involved in E site tRNA release. Functionally, protein L1 is also a translational repressor protein, it controls the translation of its operon by binding to its mRNA. The sequence is that of Large ribosomal subunit protein uL1 from Methanococcus maripaludis (strain C5 / ATCC BAA-1333).